A 256-amino-acid chain; its full sequence is Protein FixA (256 aa).

This sequence belongs to the ETF beta-subunit/FixA family. Heterodimer of FixA and FixB.

The protein operates within amine and polyamine metabolism; carnitine metabolism. Required for anaerobic carnitine reduction. May bring reductant to CaiA. In Salmonella agona (strain SL483), this protein is Protein FixA.